We begin with the raw amino-acid sequence, 42 residues long: Crotamine Ile-19 (42 aa).

Intrachain disulfides connect C4-C36, C11-C30, and C18-C37.

The protein belongs to the crotamine-myotoxin family. As to quaternary structure, monomer. As to expression, expressed by the venom gland.

The protein resides in the secreted. Functionally, cationic peptide that possesses multiple functions. It acts as a cell-penetrating peptide (CPP), and as a potent voltage-gated potassium channel (Kv) inhibitor, it induces severe muscle necrosis by a non-enzymatic mechanism and exhibits antimicrobial activities. It also elicits a short-lasting hyperextension of the hind limb. It does not cause observable tissue damage (whereas the whole venom causes severe myonecrosis accompanied by edema and hemorrhage). This chain is Crotamine Ile-19, found in Crotalus durissus ruruima (South American rattlesnake).